A 2442-amino-acid chain; its full sequence is Centrosome-associated protein CEP250 (2442 aa).

Coiled coils occupy residues 95–158, 244–352, 395–1172, and 1243–2227; these read NLDE…KESQ, AQLL…TQVM, LTRR…EQQP, and SALH…KERL. 2 stretches are compositionally biased toward basic and acidic residues: residues 1273 to 1289 and 1699 to 1715; these read LTDT…ELQD and LTTQ…EGKG. 3 disordered regions span residues 1273–1308, 1699–1725, and 1820–1839; these read LTDT…EGKQ, LTTQ…GSLE, and EALQ…VKEK. The segment covering 1820–1831 has biased composition (low complexity); it reads EALQQEQQQAQG. Ser2138 carries the phosphoserine modification. Thr2218 bears the Phosphothreonine mark. The interval 2223-2244 is disordered; that stretch reads EKERLHSPGATSTAELGSRGEQ. Residues Ser2229, Ser2252, and Ser2322 each carry the phosphoserine modification. Residues 2262-2376 are a coiled coil; that stretch reads GMEKQSWRQR…RKQKQDYITR (115 aa). Disordered stretches follow at residues 2307 to 2345 and 2416 to 2442; these read RRKL…KNSD and ESLT…AASR. Positions 2328-2338 are enriched in polar residues; the sequence is ATASSPTQQDG. Ser2417 and Ser2421 each carry phosphoserine; by NEK2. A compositionally biased stretch (polar residues) spans 2433-2442; it reads SPSTTQAASR.

In terms of assembly, monomer and homodimer. Forms a complex in vitro with both NEK2 kinase and the PPP1CC catalytic subunit of protein phosphatase 1 (PP1). Interacts with CEP135. Interacts with CROCC/rootletin. Interacts with CNTLN. Interacts with NIN (via C-terminus). Interacts with CCDC102B (via N-terminus); the interaction results in recruitment of CCDC102B to the proximal ends of centrioles. In terms of processing, differentially phosphorylated during cell cycle. Phosphorylation may regulate association/dissociation from centrosome. During M phase of mitosis, C-terminal part is phosphorylated by NEK2, suggesting that it may trigger the dissociation from the mitotic centrosome. Dephosphorylated in vitro by the PP1 phosphatase. In terms of tissue distribution, ubiquitously and weakly expressed.

The protein localises to the cytoplasm. The protein resides in the perinuclear region. Its subcellular location is the cytoskeleton. It localises to the microtubule organizing center. It is found in the centrosome. The protein localises to the centriole. The protein resides in the cilium basal body. Its subcellular location is the cell projection. It localises to the cilium. It is found in the photoreceptor outer segment. The protein localises to the photoreceptor inner segment. In terms of biological role, plays an important role in centrosome cohesion during interphase. Recruits CCDC102B to the proximal ends of centrioles. Maintains centrosome cohesion by forming intercentriolar linkages. Accumulates at the proximal end of each centriole, forming supramolecular assemblies with viscous material properties that promote organelle cohesion. May be involved in ciliogenesis. This is Centrosome-associated protein CEP250 (CEP250) from Homo sapiens (Human).